A 540-amino-acid polypeptide reads, in one-letter code: Membrane protein insertase YidC (540 aa).

5 helical membrane-spanning segments follow: residues 1–21 (MVVQ…MMLD), 351–371 (NWGI…FPLT), 418–438 (LGGC…YYML), 464–484 (ILPI…PSSI), and 497–517 (PLIF…YYII).

It belongs to the OXA1/ALB3/YidC family. Type 1 subfamily. As to quaternary structure, interacts with the Sec translocase complex via SecD. Specifically interacts with transmembrane segments of nascent integral membrane proteins during membrane integration.

The protein resides in the cell membrane. Its function is as follows. Required for the insertion and/or proper folding and/or complex formation of integral membrane proteins into the membrane. Involved in integration of membrane proteins that insert both dependently and independently of the Sec translocase complex, as well as at least some lipoproteins. Aids folding of multispanning membrane proteins. The sequence is that of Membrane protein insertase YidC from Wigglesworthia glossinidia brevipalpis.